The sequence spans 336 residues: Anthranilate phosphoribosyltransferase (336 aa).

5-phospho-alpha-D-ribose 1-diphosphate-binding positions include G82, 85 to 86 (GD), T90, 92 to 95 (NVST), 110 to 118 (KHGNRSVSS), and S122. Residue G82 coordinates anthranilate. S94 contacts Mg(2+). N113 contacts anthranilate. R168 lines the anthranilate pocket. D227 and E228 together coordinate Mg(2+).

Belongs to the anthranilate phosphoribosyltransferase family. Homodimer. The cofactor is Mg(2+).

It catalyses the reaction N-(5-phospho-beta-D-ribosyl)anthranilate + diphosphate = 5-phospho-alpha-D-ribose 1-diphosphate + anthranilate. It participates in amino-acid biosynthesis; L-tryptophan biosynthesis; L-tryptophan from chorismate: step 2/5. In terms of biological role, catalyzes the transfer of the phosphoribosyl group of 5-phosphorylribose-1-pyrophosphate (PRPP) to anthranilate to yield N-(5'-phosphoribosyl)-anthranilate (PRA). This Leptospira borgpetersenii serovar Hardjo-bovis (strain JB197) protein is Anthranilate phosphoribosyltransferase.